A 313-amino-acid polypeptide reads, in one-letter code: Putative serine protease 29 (313 aa).

Positions 1 to 22 (MPTTPDPGSEPPARTPRPPPLT) are enriched in pro residues. The disordered stretch occupies residues 1–27 (MPTTPDPGSEPPARTPRPPPLTPGLSP). A Peptidase S1 domain is found at 68 to 310 (IVGGHNAPPG…YVPWILQQVG (243 aa)). Cysteines 99 and 115 form a disulfide. His-114 (charge relay system) is an active-site residue. A glycan (N-linked (GlcNAc...) asparagine) is linked at Asn-143. Residue Asp-161 is the Charge relay system of the active site. Intrachain disulfides connect Cys-193–Cys-268, Cys-226–Cys-249, and Cys-258–Cys-286. Ser-262 acts as the Charge relay system in catalysis.

This sequence belongs to the peptidase S1 family.

It localises to the secreted. The sequence is that of Putative serine protease 29 (PRSS29P) from Homo sapiens (Human).